The chain runs to 354 residues: Cyclin-D1-2 (354 aa).

2 disordered regions span residues 37–74 (FFQQ…EEEE) and 331–354 (TTAT…RRKM). 2 stretches are compositionally biased toward low complexity: residues 44 to 66 (PAPA…AGSC) and 331 to 346 (TTAT…VSSS).

This sequence belongs to the cyclin family. Cyclin D subfamily.

This chain is Cyclin-D1-2 (CYCD1-2), found in Oryza sativa subsp. japonica (Rice).